Reading from the N-terminus, the 115-residue chain is NADH-ubiquinone oxidoreductase chain 3 (115 aa).

Met1 carries the N-formylmethionine modification. Transmembrane regions (helical) follow at residues 3–23, 55–75, and 84–104; these read LMLA…IAFW, FFLV…LLPL, and LNTM…SLAY.

Core subunit of respiratory chain NADH dehydrogenase (Complex I) which is composed of 45 different subunits. Interacts with TMEM186. Interacts with TMEM242.

Its subcellular location is the mitochondrion inner membrane. It carries out the reaction a ubiquinone + NADH + 5 H(+)(in) = a ubiquinol + NAD(+) + 4 H(+)(out). Core subunit of the mitochondrial membrane respiratory chain NADH dehydrogenase (Complex I) which catalyzes electron transfer from NADH through the respiratory chain, using ubiquinone as an electron acceptor. Essential for the catalytic activity of complex I. The polypeptide is NADH-ubiquinone oxidoreductase chain 3 (Bos taurus (Bovine)).